We begin with the raw amino-acid sequence, 158 residues long: Trafficking protein particle complex subunit 6B (158 aa).

This sequence belongs to the TRAPP small subunits family. BET3 subfamily. As to quaternary structure, homodimer. Part of a TRAPP complex. Heterodimer with TRAPPC3. The heterodimer TRAPPC6B-TRAPPC3 interacts with TRAPPC1 likely providing a core for TRAPP complex formation.

Its subcellular location is the golgi apparatus. It is found in the cis-Golgi network. The protein localises to the endoplasmic reticulum. Component of a transport protein particle (TRAPP) complex that may function in specific stages of inter-organelle traffic. Specifically involved in the early development of neural circuitry, likely by controlling the frequency and amplitude of intracellular calcium transients implicated in the regulation of neuron differentiation and survival. This is Trafficking protein particle complex subunit 6B from Bos taurus (Bovine).